A 357-amino-acid polypeptide reads, in one-letter code: Glycerol-3-phosphate dehydrogenase [NAD(P)+] (357 aa).

NADPH-binding residues include serine 30, phenylalanine 31, arginine 51, and lysine 124. Sn-glycerol 3-phosphate contacts are provided by lysine 124 and glycine 152. Residue alanine 156 participates in NADPH binding. Sn-glycerol 3-phosphate-binding residues include lysine 207, aspartate 260, serine 270, arginine 271, and asparagine 272. Catalysis depends on lysine 207, which acts as the Proton acceptor. Residue arginine 271 coordinates NADPH. Glutamate 297 contributes to the NADPH binding site.

This sequence belongs to the NAD-dependent glycerol-3-phosphate dehydrogenase family.

The protein localises to the cytoplasm. It catalyses the reaction sn-glycerol 3-phosphate + NAD(+) = dihydroxyacetone phosphate + NADH + H(+). The catalysed reaction is sn-glycerol 3-phosphate + NADP(+) = dihydroxyacetone phosphate + NADPH + H(+). The protein operates within membrane lipid metabolism; glycerophospholipid metabolism. Catalyzes the reduction of the glycolytic intermediate dihydroxyacetone phosphate (DHAP) to sn-glycerol 3-phosphate (G3P), the key precursor for phospholipid synthesis. The protein is Glycerol-3-phosphate dehydrogenase [NAD(P)+] of Acinetobacter baylyi (strain ATCC 33305 / BD413 / ADP1).